We begin with the raw amino-acid sequence, 277 residues long: Large ribosomal subunit protein uL2 (277 aa).

Residues 222–277 are disordered; that stretch reads GVTMNPVDHPHGGGEGRTSGGRNPVTPWGFPTKGKKTRNNKATDKFIVSSRHKRKK.

It belongs to the universal ribosomal protein uL2 family. In terms of assembly, part of the 50S ribosomal subunit. Forms a bridge to the 30S subunit in the 70S ribosome.

In terms of biological role, one of the primary rRNA binding proteins. Required for association of the 30S and 50S subunits to form the 70S ribosome, for tRNA binding and peptide bond formation. It has been suggested to have peptidyltransferase activity; this is somewhat controversial. Makes several contacts with the 16S rRNA in the 70S ribosome. In Xanthobacter autotrophicus (strain ATCC BAA-1158 / Py2), this protein is Large ribosomal subunit protein uL2.